The primary structure comprises 115 residues: Large ribosomal subunit protein uL18 (115 aa).

Belongs to the universal ribosomal protein uL18 family. As to quaternary structure, part of the 50S ribosomal subunit; part of the 5S rRNA/L5/L18/L25 subcomplex. Contacts the 5S and 23S rRNAs.

This is one of the proteins that bind and probably mediate the attachment of the 5S RNA into the large ribosomal subunit, where it forms part of the central protuberance. This chain is Large ribosomal subunit protein uL18, found in Marinobacter nauticus (strain ATCC 700491 / DSM 11845 / VT8) (Marinobacter aquaeolei).